The sequence spans 146 residues: Urease accessory protein UreE 1 (146 aa).

This sequence belongs to the UreE family.

The protein localises to the cytoplasm. Functionally, involved in urease metallocenter assembly. Binds nickel. Probably functions as a nickel donor during metallocenter assembly. In Pseudomonas syringae pv. tomato (strain ATCC BAA-871 / DC3000), this protein is Urease accessory protein UreE 1.